The primary structure comprises 799 residues: 1-phosphatidylinositol 4,5-bisphosphate phosphodiesterase delta-4 (799 aa).

Positions 16–124 (LLMQEGMPMR…WMRGLHLLVD (109 aa)) constitute a PH domain. Residues 26–53 (KVRSKSWKKLRYFRLQNDGMTVWHARQA) are substrate binding. 3 consecutive EF-hand domains span residues 134–169 (RLDQWLSDWFQRGDKNQDGKMSFQEVQRLLHLMNVE), 170–205 (MDQEYAFSLFQAADTSQSGTLEGEEFVEFYKALTKR), and 206–237 (AEVQELFESFSADGQKLTLLEFSDFLREEQKE). Residues Asp147, Asn149, Asp151, Lys153, Glu158, Asp183, Ser185, Ser187, Thr189, and Glu194 each contribute to the Ca(2+) site. Positions 213–243 (ESFSADGQKLTLLEFSDFLREEQKERDCTSE) match the GBA motif. One can recognise a PI-PLC X-box domain in the interval 290–435 (QDMTQPLNHY…LRRKILVKGK (146 aa)). Residue His305 is part of the active site. Ca(2+) is bound by residues Asn306, Glu335, and Asp337. His350 is a catalytic residue. Ca(2+) is bound at residue Glu384. The substrate site is built by Lys433 and Lys435. Ser460 carries the post-translational modification Phosphoserine. One can recognise a PI-PLC Y-box domain in the interval 530-646 (LSSLVIYLKS…GYVLKPDFLR (117 aa)). Substrate is bound by residues Ser559 and Arg586. The C2 domain maps to 646–773 (RDNQSSFHPE…QGYRHIHLLS (128 aa)). Ile687, Asp689, Asn713, Asp742, Tyr743, and Asp744 together coordinate Ca(2+). A PDZ-binding motif is present at residues 768-771 (HIHL).

Interacts with GRIP1. Interacts (via GBA motif) with guanine nucleotide-binding protein G(i) alpha subunit GNAI3 (inactive GDP-bound form); low-affinity interaction. Requires Ca(2+) as cofactor.

It is found in the membrane. The protein localises to the nucleus. The protein resides in the cytoplasm. It localises to the endoplasmic reticulum. The enzyme catalyses a 1,2-diacyl-sn-glycero-3-phospho-(1D-myo-inositol-4,5-bisphosphate) + H2O = 1D-myo-inositol 1,4,5-trisphosphate + a 1,2-diacyl-sn-glycerol + H(+). The catalysed reaction is a 1,2-diacyl-sn-glycero-3-phospho-(1D-myo-inositol) + H2O = 1D-myo-inositol 1-phosphate + a 1,2-diacyl-sn-glycerol + H(+). Hydrolyzes the phosphatidylinositol 4,5-bisphosphate (PIP2) to generate 2 second messenger molecules diacylglycerol (DAG) and inositol 1,4,5-trisphosphate (IP3). DAG mediates the activation of protein kinase C (PKC), while IP3 releases Ca(2+) from intracellular stores. Required for acrosome reaction in sperm during fertilization, probably by acting as an important enzyme for intracellular Ca(2+) mobilization in the zona pellucida-induced acrosome reaction. May play a role in cell growth. Modulates the liver regeneration in cooperation with nuclear PKC. Overexpression up-regulates the Erk signaling pathway and proliferation. The polypeptide is 1-phosphatidylinositol 4,5-bisphosphate phosphodiesterase delta-4 (PLCD4) (Macaca fascicularis (Crab-eating macaque)).